Here is a 122-residue protein sequence, read N- to C-terminus: Large ribosomal subunit protein uL18 (122 aa).

Belongs to the universal ribosomal protein uL18 family. Part of the 50S ribosomal subunit; part of the 5S rRNA/L5/L18/L25 subcomplex. Contacts the 5S and 23S rRNAs.

Functionally, this is one of the proteins that bind and probably mediate the attachment of the 5S RNA into the large ribosomal subunit, where it forms part of the central protuberance. The polypeptide is Large ribosomal subunit protein uL18 (Prochlorococcus marinus (strain MIT 9515)).